The primary structure comprises 315 residues: Lipoyl synthase (315 aa).

Residues cysteine 62, cysteine 67, cysteine 73, cysteine 88, cysteine 92, cysteine 95, and serine 302 each contribute to the [4Fe-4S] cluster site. One can recognise a Radical SAM core domain in the interval 74–291 (FNHGAATFMI…KKIALKLGFS (218 aa)).

It belongs to the radical SAM superfamily. Lipoyl synthase family. Requires [4Fe-4S] cluster as cofactor.

The protein resides in the cytoplasm. It carries out the reaction [[Fe-S] cluster scaffold protein carrying a second [4Fe-4S](2+) cluster] + N(6)-octanoyl-L-lysyl-[protein] + 2 oxidized [2Fe-2S]-[ferredoxin] + 2 S-adenosyl-L-methionine + 4 H(+) = [[Fe-S] cluster scaffold protein] + N(6)-[(R)-dihydrolipoyl]-L-lysyl-[protein] + 4 Fe(3+) + 2 hydrogen sulfide + 2 5'-deoxyadenosine + 2 L-methionine + 2 reduced [2Fe-2S]-[ferredoxin]. It participates in protein modification; protein lipoylation via endogenous pathway; protein N(6)-(lipoyl)lysine from octanoyl-[acyl-carrier-protein]: step 2/2. Its function is as follows. Catalyzes the radical-mediated insertion of two sulfur atoms into the C-6 and C-8 positions of the octanoyl moiety bound to the lipoyl domains of lipoate-dependent enzymes, thereby converting the octanoylated domains into lipoylated derivatives. In Ruthia magnifica subsp. Calyptogena magnifica, this protein is Lipoyl synthase.